Here is a 227-residue protein sequence, read N- to C-terminus: uncharacterized protein (227 aa).

The protein localises to the virion. This is an uncharacterized protein from Acanthamoeba polyphaga (Amoeba).